A 170-amino-acid polypeptide reads, in one-letter code: MHVFYAVIDNTIDLECLTLHKGVEYGCKLQLISKNTKTVNIKCITEVYYSDHLLKPLMAYVNDKLIQLDRKKLRHKIVYSIDLTLYDEVTNMLVCSNMDPDLIDRYYAKICLDFDNNVYTVKDKNYTNAVIEYPVVCNFRRYSESDSDSDVDDRAELHKRNNDSDSDDYT.

The segment at 145-170 (SDSDSDVDDRAELHKRNNDSDSDDYT) is disordered. Residues 152–163 (DDRAELHKRNND) are compositionally biased toward basic and acidic residues.

This sequence belongs to the poxviridae C7 protein family.

Its function is as follows. Plays a role for multiplication of the virus in different cell types. This Bos taurus (Bovine) protein is Probable host range protein 2.